Consider the following 420-residue polypeptide: F-box/LRR-repeat protein At2g43260 (420 aa).

One can recognise an F-box domain in the interval 7-53; sequence NPNSIDILPELLEEVLLRLPTKSILKCRIVSKQWRSLLESSRFAERH. 2 LRR repeats span residues 112 to 135 and 226 to 251; these read QDWI…LNHN and VYRI…QITV.

This chain is F-box/LRR-repeat protein At2g43260, found in Arabidopsis thaliana (Mouse-ear cress).